A 134-amino-acid polypeptide reads, in one-letter code: Small ribosomal subunit protein bS16 (134 aa).

The interval 80-134 (GLAKRPTRSNPTKGEPGKKAQERLAMAKQAEEEAAAKAAEAAAAAAAPAEEAASE) is disordered. Residues 115-134 (AKAAEAAAAAAAPAEEAASE) are compositionally biased toward low complexity.

It belongs to the bacterial ribosomal protein bS16 family.

The chain is Small ribosomal subunit protein bS16 from Brucella anthropi (strain ATCC 49188 / DSM 6882 / CCUG 24695 / JCM 21032 / LMG 3331 / NBRC 15819 / NCTC 12168 / Alc 37) (Ochrobactrum anthropi).